A 68-amino-acid chain; its full sequence is Large ribosomal subunit protein bL32 (68 aa).

The interval 1–20 (MAVQQNKVSKSRRNNRRAHD) is disordered.

Belongs to the bacterial ribosomal protein bL32 family.

The sequence is that of Large ribosomal subunit protein bL32 from Ruegeria sp. (strain TM1040) (Silicibacter sp.).